A 149-amino-acid polypeptide reads, in one-letter code: Thioredoxin-like protein 4B (149 aa).

Belongs to the DIM1 family. Homodimer. Interacts with the U5-102 kDa protein subunit of the spliceosome.

Its subcellular location is the nucleus. Essential role in pre-mRNA splicing. Required in cell cycle progression for S/G(2) transition. This is Thioredoxin-like protein 4B (Txnl4b) from Mus musculus (Mouse).